Here is a 73-residue protein sequence, read N- to C-terminus: Disintegrin molossin (73 aa).

One can recognise a Disintegrin domain in the interval E1–A73. Intrachain disulfides connect C6–C21, C8–C16, C15–C38, C29–C35, C34–C59, and C47–C66. The short motif at R51–D53 is the Cell attachment site element.

It belongs to the venom metalloproteinase (M12B) family. P-II subfamily. P-IIa sub-subfamily. Monomer (disintegrin). In terms of tissue distribution, expressed by the venom gland.

The protein resides in the secreted. Its function is as follows. Inhibits fibrinogen interaction with platelets. Acts by binding to alpha-IIb/beta-3 (ITGA2B/ITGB3) on the platelet surface and inhibits aggregation induced by ADP, thrombin, platelet-activating factor and collagen. The chain is Disintegrin molossin from Crotalus molossus molossus (Northern black-tailed rattlesnake).